Consider the following 121-residue polypeptide: Large ribosomal subunit protein bL12 (121 aa).

It belongs to the bacterial ribosomal protein bL12 family. Homodimer. Part of the ribosomal stalk of the 50S ribosomal subunit. Forms a multimeric L10(L12)X complex, where L10 forms an elongated spine to which 2 to 4 L12 dimers bind in a sequential fashion. Binds GTP-bound translation factors.

Functionally, forms part of the ribosomal stalk which helps the ribosome interact with GTP-bound translation factors. Is thus essential for accurate translation. This is Large ribosomal subunit protein bL12 from Xanthomonas campestris pv. campestris (strain B100).